Here is a 298-residue protein sequence, read N- to C-terminus: Lipoyl synthase (298 aa).

Residues C40, C45, C51, C67, C71, C74, and S280 each coordinate [4Fe-4S] cluster. The Radical SAM core domain maps to 53-269; the sequence is AVRKTATFMI…KEIALSKGFS (217 aa).

This sequence belongs to the radical SAM superfamily. Lipoyl synthase family. [4Fe-4S] cluster serves as cofactor.

The protein resides in the cytoplasm. It carries out the reaction [[Fe-S] cluster scaffold protein carrying a second [4Fe-4S](2+) cluster] + N(6)-octanoyl-L-lysyl-[protein] + 2 oxidized [2Fe-2S]-[ferredoxin] + 2 S-adenosyl-L-methionine + 4 H(+) = [[Fe-S] cluster scaffold protein] + N(6)-[(R)-dihydrolipoyl]-L-lysyl-[protein] + 4 Fe(3+) + 2 hydrogen sulfide + 2 5'-deoxyadenosine + 2 L-methionine + 2 reduced [2Fe-2S]-[ferredoxin]. It functions in the pathway protein modification; protein lipoylation via endogenous pathway; protein N(6)-(lipoyl)lysine from octanoyl-[acyl-carrier-protein]. Functionally, catalyzes the radical-mediated insertion of two sulfur atoms into the C-6 and C-8 positions of the octanoyl moiety bound to the lipoyl domains of lipoate-dependent enzymes, thereby converting the octanoylated domains into lipoylated derivatives. The chain is Lipoyl synthase from Bacillus anthracis (strain A0248).